The sequence spans 223 residues: Cytidine deaminase 3 (223 aa).

CMP/dCMP-type deaminase domains are found at residues 21–154 and 184–223; these read TEPM…FSPD and SDCS…WYRG. 62–64 contributes to the substrate binding site; it reads NVE. Position 75 (His75) interacts with Zn(2+). Glu77 acts as the Proton donor in catalysis. Zn(2+) contacts are provided by Cys110 and Cys113.

The protein belongs to the cytidine and deoxycytidylate deaminase family. Homodimer. The cofactor is Zn(2+).

It carries out the reaction cytidine + H2O + H(+) = uridine + NH4(+). The catalysed reaction is 2'-deoxycytidine + H2O + H(+) = 2'-deoxyuridine + NH4(+). This enzyme scavenges exogenous and endogenous cytidine and 2'-deoxycytidine for UMP synthesis. The polypeptide is Cytidine deaminase 3 (CDA3) (Arabidopsis thaliana (Mouse-ear cress)).